Here is a 231-residue protein sequence, read N- to C-terminus: ATP phosphoribosyltransferase (231 aa).

This sequence belongs to the ATP phosphoribosyltransferase family. Short subfamily. Heteromultimer composed of HisG and HisZ subunits.

The protein resides in the cytoplasm. It catalyses the reaction 1-(5-phospho-beta-D-ribosyl)-ATP + diphosphate = 5-phospho-alpha-D-ribose 1-diphosphate + ATP. Its pathway is amino-acid biosynthesis; L-histidine biosynthesis; L-histidine from 5-phospho-alpha-D-ribose 1-diphosphate: step 1/9. Its function is as follows. Catalyzes the condensation of ATP and 5-phosphoribose 1-diphosphate to form N'-(5'-phosphoribosyl)-ATP (PR-ATP). Has a crucial role in the pathway because the rate of histidine biosynthesis seems to be controlled primarily by regulation of HisG enzymatic activity. The sequence is that of ATP phosphoribosyltransferase from Brucella anthropi (strain ATCC 49188 / DSM 6882 / CCUG 24695 / JCM 21032 / LMG 3331 / NBRC 15819 / NCTC 12168 / Alc 37) (Ochrobactrum anthropi).